Reading from the N-terminus, the 273-residue chain is Formamidopyrimidine-DNA glycosylase (273 aa).

Proline 2 serves as the catalytic Schiff-base intermediate with DNA. Glutamate 3 (proton donor) is an active-site residue. Residue lysine 57 is the Proton donor; for beta-elimination activity of the active site. 3 residues coordinate DNA: histidine 91, arginine 110, and lysine 151. The segment at 236–270 (QVYGRKGEACNDCGTIIEAKVIGQRNSYFCPHCQI) adopts an FPG-type zinc-finger fold. The active-site Proton donor; for delta-elimination activity is arginine 260.

Belongs to the FPG family. As to quaternary structure, monomer. Zn(2+) is required as a cofactor.

It carries out the reaction Hydrolysis of DNA containing ring-opened 7-methylguanine residues, releasing 2,6-diamino-4-hydroxy-5-(N-methyl)formamidopyrimidine.. It catalyses the reaction 2'-deoxyribonucleotide-(2'-deoxyribose 5'-phosphate)-2'-deoxyribonucleotide-DNA = a 3'-end 2'-deoxyribonucleotide-(2,3-dehydro-2,3-deoxyribose 5'-phosphate)-DNA + a 5'-end 5'-phospho-2'-deoxyribonucleoside-DNA + H(+). In terms of biological role, involved in base excision repair of DNA damaged by oxidation or by mutagenic agents. Acts as a DNA glycosylase that recognizes and removes damaged bases. Has a preference for oxidized purines, such as 7,8-dihydro-8-oxoguanine (8-oxoG). Has AP (apurinic/apyrimidinic) lyase activity and introduces nicks in the DNA strand. Cleaves the DNA backbone by beta-delta elimination to generate a single-strand break at the site of the removed base with both 3'- and 5'-phosphates. This chain is Formamidopyrimidine-DNA glycosylase, found in Actinobacillus pleuropneumoniae serotype 7 (strain AP76).